Here is a 500-residue protein sequence, read N- to C-terminus: Cytochrome P450 71B26 (500 aa).

The helical transmembrane segment at 1 to 21 (MDSIWILSLLFFIIFLLLAAF) threads the bilayer. Cys-440 contributes to the heme binding site.

The protein belongs to the cytochrome P450 family. Requires heme as cofactor.

The protein resides in the membrane. In Arabidopsis thaliana (Mouse-ear cress), this protein is Cytochrome P450 71B26 (CYP71B26).